Here is a 553-residue protein sequence, read N- to C-terminus: Fusion glycoprotein F0 (553 aa).

Residues 1–31 (MGSRPFTKNPAPMMLTIRVALVLSCICPANS) form the signal peptide. Residues 31-500 (SIDGRPFAAA…VNVKLTSTSA (470 aa)) are Extracellular-facing. 5 disulfides stabilise this stretch: Cys-76–Cys-199, Cys-338–Cys-347, Cys-362–Cys-370, Cys-394–Cys-399, and Cys-401–Cys-424. Residues Asn-85 and Asn-191 are each glycosylated (N-linked (GlcNAc...) asparagine; by host). A glycan (N-linked (GlcNAc...) asparagine; by host) is linked at Asn-366. 2 N-linked (GlcNAc...) asparagine; by host glycosylation sites follow: Asn-447 and Asn-471. Residues 463–499 (ISTELGNVNNSISNALNKLEESNRKLDKVNVKLTSTS) adopt a coiled-coil conformation. The chain crosses the membrane as a helical span at residues 501–521 (LITYIVLTIISLVFGILSLIL). Topologically, residues 522 to 553 (ACYLMYKQKAQQKTLLWLGNNTLDQMRATTKM) are cytoplasmic. Residue Cys-523 is the site of S-palmitoyl cysteine; by host attachment.

This sequence belongs to the paramyxoviruses fusion glycoprotein family. In terms of assembly, homotrimer of disulfide-linked F1-F2. Post-translationally, the inactive precursor F0 is glycosylated and proteolytically cleaved into F1 and F2 to be functionally active. The cleavage is mediated by cellular proteases during the transport and maturation of the polypeptide.

It localises to the virion membrane. The protein resides in the host cell membrane. Its function is as follows. Class I viral fusion protein. Under the current model, the protein has at least 3 conformational states: pre-fusion native state, pre-hairpin intermediate state, and post-fusion hairpin state. During viral and plasma cell membrane fusion, the heptad repeat (HR) regions assume a trimer-of-hairpins structure, positioning the fusion peptide in close proximity to the C-terminal region of the ectodomain. The formation of this structure appears to drive apposition and subsequent fusion of viral and plasma cell membranes. Directs fusion of viral and cellular membranes leading to delivery of the nucleocapsid into the cytoplasm. This fusion is pH independent and occurs directly at the outer cell membrane. The trimer of F1-F2 (F protein) probably interacts with HN at the virion surface. Upon HN binding to its cellular receptor, the hydrophobic fusion peptide is unmasked and interacts with the cellular membrane, inducing the fusion between cell and virion membranes. Later in infection, F proteins expressed at the plasma membrane of infected cells could mediate fusion with adjacent cells to form syncytia, a cytopathic effect that could lead to tissue necrosis. This chain is Fusion glycoprotein F0 (F), found in Gallus gallus (Chicken).